Reading from the N-terminus, the 274-residue chain is 2-dehydro-3-deoxyphosphooctonate aldolase (274 aa).

Belongs to the KdsA family.

It is found in the cytoplasm. The catalysed reaction is D-arabinose 5-phosphate + phosphoenolpyruvate + H2O = 3-deoxy-alpha-D-manno-2-octulosonate-8-phosphate + phosphate. It participates in carbohydrate biosynthesis; 3-deoxy-D-manno-octulosonate biosynthesis; 3-deoxy-D-manno-octulosonate from D-ribulose 5-phosphate: step 2/3. It functions in the pathway bacterial outer membrane biogenesis; lipopolysaccharide biosynthesis. The protein is 2-dehydro-3-deoxyphosphooctonate aldolase of Rickettsia canadensis (strain McKiel).